The chain runs to 107 residues: Circadian clock oscillator protein KaiB (107 aa).

Belongs to the KaiB family. In terms of assembly, may undergo a major conformational rearrangment; in the free state forms homooligomers. When bound to KaiC switches to a monomeric thioredoxin-fold (KaiB(fs)). The active oscillator complex is probably KaiC(6):KaiB(6).

Component of the KaiBC clock protein complex, which constitutes the main circadian regulator in cyanobacteria; it may modify the ATPase activity of KaiC. In terms of biological role, does not stimulate dephosphorylation of endogenous KaiC, although it does stimulate dephosphorylation of KiaC from S.elongatus strain PCC 7942. Reduces the ATPase activity of KaiC by about half in vitro, which may be its function in vivo. Functionally, may be a metamorphic protein which reversibly switches between an inactive tetrameric fold and a rare, thioredoxin-like monomeric fold (KaiB(fs)). KaiB(fs) binds phospho-KaiC, and perhaps clock output effectors. In Prochlorococcus marinus subsp. pastoris (strain CCMP1986 / NIES-2087 / MED4), this protein is Circadian clock oscillator protein KaiB.